A 261-amino-acid polypeptide reads, in one-letter code: F-actin-capping protein subunit alpha (261 aa).

This sequence belongs to the F-actin-capping protein alpha subunit family. In terms of assembly, heterodimer of an alpha and a beta subunit.

F-actin-capping proteins bind in a Ca(2+)-independent manner to the fast growing ends of actin filaments (barbed end) thereby blocking the exchange of subunits at these ends. Unlike other capping proteins (such as gelsolin and severin), these proteins do not sever actin filaments. The sequence is that of F-actin-capping protein subunit alpha (CAP1) from Eremothecium gossypii (strain ATCC 10895 / CBS 109.51 / FGSC 9923 / NRRL Y-1056) (Yeast).